A 333-amino-acid chain; its full sequence is Homeobox protein engrailed-2 (333 aa).

3 disordered regions span residues 1–49, 95–206, and 223–250; these read MEEN…RALM, GRGG…GANL, and SDRP…PRTA. Composition is skewed to gly residues over residues 25-36 and 95-117; these read PGGGSGGGGGSS and GRGG…GAGG. 2 stretches are compositionally biased toward low complexity: residues 142–151 and 191–200; these read PLPAAGSDSP and LSVSSDSDSS. The homeobox DNA-binding region spans 244-303; the sequence is DKRPRTAFTAEQLQRLKAEFQTNRYLTEQRRQSLAQELSLNESQIKIWFQNKRAKIKKAT.

It belongs to the engrailed homeobox family.

Its subcellular location is the nucleus. This chain is Homeobox protein engrailed-2 (EN2), found in Homo sapiens (Human).